The sequence spans 105 residues: uncharacterized protein (105 aa).

This is an uncharacterized protein from Fowlpox virus (strain NVSL) (FPV).